The chain runs to 227 residues: Cytochrome c oxidase subunit 2 (227 aa).

The Mitochondrial intermembrane portion of the chain corresponds to 1-14 (MAHAAQVGLQDATS). Residues 15-45 (PIMEELITFHDHALMIIFLICFLVLYALFLT) traverse the membrane as a helical segment. Residues 46–59 (LTTKLTNTNISDAQ) lie on the Mitochondrial matrix side of the membrane. A helical membrane pass occupies residues 60–87 (EMETVWTILPAIILVLIALPSLRILYMT). Topologically, residues 88 to 227 (DEVNDPSLTI…IFEMGPVFTL (140 aa)) are mitochondrial intermembrane. Cu cation-binding residues include His161, Cys196, Glu198, Cys200, His204, and Met207. Glu198 serves as a coordination point for Mg(2+).

Belongs to the cytochrome c oxidase subunit 2 family. As to quaternary structure, component of the cytochrome c oxidase (complex IV, CIV), a multisubunit enzyme composed of 14 subunits. The complex is composed of a catalytic core of 3 subunits MT-CO1, MT-CO2 and MT-CO3, encoded in the mitochondrial DNA, and 11 supernumerary subunits COX4I1 (or COX4I2), COX5A, COX5B, COX6A1 (or COX6A2), COX6B1 (or COX6B2), COX6C, COX7A2 (or COX7A1), COX7B, COX7C, COX8A and NDUFA4, which are encoded in the nuclear genome. The complex exists as a monomer or a dimer and forms supercomplexes (SCs) in the inner mitochondrial membrane with NADH-ubiquinone oxidoreductase (complex I, CI) and ubiquinol-cytochrome c oxidoreductase (cytochrome b-c1 complex, complex III, CIII), resulting in different assemblies (supercomplex SCI(1)III(2)IV(1) and megacomplex MCI(2)III(2)IV(2)). Found in a complex with TMEM177, COA6, COX18, COX20, SCO1 and SCO2. Interacts with TMEM177 in a COX20-dependent manner. Interacts with COX20. Interacts with COX16. Cu cation is required as a cofactor.

The protein localises to the mitochondrion inner membrane. It catalyses the reaction 4 Fe(II)-[cytochrome c] + O2 + 8 H(+)(in) = 4 Fe(III)-[cytochrome c] + 2 H2O + 4 H(+)(out). In terms of biological role, component of the cytochrome c oxidase, the last enzyme in the mitochondrial electron transport chain which drives oxidative phosphorylation. The respiratory chain contains 3 multisubunit complexes succinate dehydrogenase (complex II, CII), ubiquinol-cytochrome c oxidoreductase (cytochrome b-c1 complex, complex III, CIII) and cytochrome c oxidase (complex IV, CIV), that cooperate to transfer electrons derived from NADH and succinate to molecular oxygen, creating an electrochemical gradient over the inner membrane that drives transmembrane transport and the ATP synthase. Cytochrome c oxidase is the component of the respiratory chain that catalyzes the reduction of oxygen to water. Electrons originating from reduced cytochrome c in the intermembrane space (IMS) are transferred via the dinuclear copper A center (CU(A)) of subunit 2 and heme A of subunit 1 to the active site in subunit 1, a binuclear center (BNC) formed by heme A3 and copper B (CU(B)). The BNC reduces molecular oxygen to 2 water molecules using 4 electrons from cytochrome c in the IMS and 4 protons from the mitochondrial matrix. The polypeptide is Cytochrome c oxidase subunit 2 (MT-CO2) (Homo sapiens (Human)).